Here is a 102-residue protein sequence, read N- to C-terminus: Putative RNA-binding protein RbpA (102 aa).

Residues S2–P79 enclose the RRM domain. Residues K73–G84 show a composition bias toward basic and acidic residues. The tract at residues K73–Y102 is disordered. Over residues P85–Y102 the composition is skewed to gly residues.

The polypeptide is Putative RNA-binding protein RbpA (rbpA) (Nostoc sp. (strain PCC 7120 / SAG 25.82 / UTEX 2576)).